The chain runs to 245 residues: Uridylate kinase (245 aa).

16 to 19 is a binding site for ATP; the sequence is KLSG. Glycine 58 is a UMP binding site. ATP-binding residues include glycine 59 and arginine 63. UMP-binding positions include aspartate 78 and 139-146; that span reads TGNPFFTT. ATP contacts are provided by threonine 166, tyrosine 172, and aspartate 175.

Belongs to the UMP kinase family. In terms of assembly, homohexamer.

The protein resides in the cytoplasm. It catalyses the reaction UMP + ATP = UDP + ADP. The protein operates within pyrimidine metabolism; CTP biosynthesis via de novo pathway; UDP from UMP (UMPK route): step 1/1. Inhibited by UTP. In terms of biological role, catalyzes the reversible phosphorylation of UMP to UDP. In Idiomarina loihiensis (strain ATCC BAA-735 / DSM 15497 / L2-TR), this protein is Uridylate kinase.